A 37-amino-acid polypeptide reads, in one-letter code: Kappa-actitoxin-Bcs3b (37 aa).

Residues 2-37 (CKDGFPTATCQHAKLVGNCKNSQKYRANCAKTCGPC) form the ShKT domain. 3 cysteine pairs are disulfide-bonded: C2/C37, C11/C30, and C20/C34. The interval 25 to 26 (KY) is crucial for binding to potassium channels.

It belongs to the sea anemone type 1 potassium channel toxin family. Type 1b subfamily.

Its subcellular location is the secreted. It localises to the nematocyst. Functionally, inhibits voltage-gated potassium channels (IC(50)=14.42 nM for rKCNA1/Kv1.1, IC(50)=80.4 nM for rKCNA2/Kv1.2, IC(50)=7.76 nM for rKCNA6/Kv1.6, IC(50)=13.12 nM for hKCNA3/Kv1.3, and IC(50)=49.14 nM for insect Shaker IR). Binds the Shaker IR channels in a voltage-independent manner. In Bunodosoma caissarum (Sea anemone), this protein is Kappa-actitoxin-Bcs3b.